Reading from the N-terminus, the 265-residue chain is Cell adhesion molecule CEACAM7 (265 aa).

Residues 1–35 (MGSPSACPYRVCIPWQGLLLTASLLTFWNLPNSAQ) form the signal peptide. The region spanning 36 to 142 (TNIDVVPFNV…EEVTRQFYVF (107 aa)) is the Ig-like V-type domain. N-linked (GlcNAc...) asparagine glycosylation is found at Asn-57, Asn-85, Asn-105, Asn-112, Asn-174, Asn-183, and Asn-198. The region spanning 146–233 (PKPSITSNNF…ASRSDPVTLN (88 aa)) is the Ig-like C2-type domain. A disulfide bond links Cys-168 and Cys-216. A lipid anchor (GPI-anchor amidated serine) is attached at Ser-242. The propeptide at 243-265 (SPDLSAGTAVSIMIGVLAGMALI) is removed in mature form.

It belongs to the immunoglobulin superfamily. CEA family. Homodimer. As to expression, expressed in columnar epithelial cells of the colon (at protein level). Strongly down-regulated in colonic adenocarcinomas.

Its subcellular location is the cell membrane. It is found in the apical cell membrane. The polypeptide is Cell adhesion molecule CEACAM7 (Homo sapiens (Human)).